An 815-amino-acid chain; its full sequence is Bifunctional aspartokinase/homoserine dehydrogenase (815 aa).

The aspartokinase stretch occupies residues 1 to 249 (MRVLKFGGTS…VPDARLLPTL (249 aa)). Positions 250 to 470 (SYREAMELSY…NNKKVVDMFL (221 aa)) are interface. 2 consecutive ACT domains span residues 320–392 (VSGP…PIEV) and 401–478 (VVGD…GVGG). The segment at 471–815 (VGVGGVGGEL…FADILRTLQH (345 aa)) is homoserine dehydrogenase. Residues Val473, Gly475, Val476, Ala504, and Thr555 each contribute to the NAD(+) site. Residue Val476 coordinates NADP(+). Val476 contributes to the NADPH binding site. Thr555 is a binding site for NADP(+). Residues Thr555, Ser556, and Lys579 each contribute to the NADPH site. Lys579 contributes to the NADP(+) binding site. Na(+) contacts are provided by Glu606, Val609, Ala611, and Leu613. 2 residues coordinate NADP(+): Gly664 and Glu667. The L-homoserine site is built by Glu667 and Asp678. Lys682 serves as the catalytic Proton donor. Gly797 contributes to the NAD(+) binding site. Residue Gly797 participates in NADP(+) binding. Position 797 (Gly797) interacts with NADPH.

This sequence in the N-terminal section; belongs to the aspartokinase family. It in the C-terminal section; belongs to the homoserine dehydrogenase family. As to quaternary structure, homotetramer. The cofactor is a metal cation.

The enzyme catalyses L-homoserine + NADP(+) = L-aspartate 4-semialdehyde + NADPH + H(+). The catalysed reaction is L-homoserine + NAD(+) = L-aspartate 4-semialdehyde + NADH + H(+). It catalyses the reaction L-aspartate + ATP = 4-phospho-L-aspartate + ADP. It functions in the pathway amino-acid biosynthesis; L-lysine biosynthesis via DAP pathway; (S)-tetrahydrodipicolinate from L-aspartate: step 1/4. The protein operates within amino-acid biosynthesis; L-methionine biosynthesis via de novo pathway; L-homoserine from L-aspartate: step 1/3. Its pathway is amino-acid biosynthesis; L-methionine biosynthesis via de novo pathway; L-homoserine from L-aspartate: step 3/3. It participates in amino-acid biosynthesis; L-threonine biosynthesis; L-threonine from L-aspartate: step 1/5. It functions in the pathway amino-acid biosynthesis; L-threonine biosynthesis; L-threonine from L-aspartate: step 3/5. Its function is as follows. Bifunctional aspartate kinase and homoserine dehydrogenase that catalyzes the first and the third steps toward the synthesis of lysine, methionine and threonine from aspartate. This chain is Bifunctional aspartokinase/homoserine dehydrogenase (thrA), found in Haemophilus influenzae (strain ATCC 51907 / DSM 11121 / KW20 / Rd).